Reading from the N-terminus, the 132-residue chain is MTMTDPIADMLTRIRNANVVKHETVDVPASNMKKELARILLEEGFIRGYDVIEDGKQGIIRIQLKYGQEGERVITGLKKISKPGMRVYAANHEIPKVLNGLGISVISTSKGILTDKQARKENVGGEVICYVW.

This sequence belongs to the universal ribosomal protein uS8 family. As to quaternary structure, part of the 30S ribosomal subunit. Contacts proteins S5 and S12.

In terms of biological role, one of the primary rRNA binding proteins, it binds directly to 16S rRNA central domain where it helps coordinate assembly of the platform of the 30S subunit. The protein is Small ribosomal subunit protein uS8 of Clostridioides difficile (strain 630) (Peptoclostridium difficile).